The chain runs to 294 residues: Sarcotoxin-2A (294 aa).

Residues 1–22 (MKSFVFFAACMAIIALSSLVQA) form the signal peptide. A propeptide spans 23–24 (YP) (removed by a dipeptidylpeptidase). Q25 carries the pyrrolidone carboxylic acid modification. At R293 the chain carries Arginine amide.

The protein belongs to the attacin/sarcotoxin-2 family. In terms of tissue distribution, synthesized by the fat body and is eventually secreted into the hemolymph.

It is found in the secreted. In terms of biological role, sarcotoxin II is an antibacterial protein which plays a role in the inflammatory response of this insect. The main effect of sarcotoxin II on E.coli may be the inhibition of cell wall synthesis, including septum formation. This is Sarcotoxin-2A from Sarcophaga peregrina (Flesh fly).